The chain runs to 545 residues: Glucose starvation modulator protein 1 (545 aa).

A DNA-binding region (zn(2)-C6 fungal-type) is located at residues 20 to 48 (CGFCHEKHLQCDVGRPCQNCRKRNIASFC). A compositionally biased stretch (basic residues) spans 51 to 60 (KVKRRRKRKR). Disordered regions lie at residues 51–131 (KVKR…AMKD) and 228–270 (YISL…WQQQ). The span at 61–71 (SDASNFDKDEA) shows a compositional bias: basic and acidic residues. A compositionally biased stretch (polar residues) spans 72-92 (ATQTLNFNTVNPGEGSSSAMT). A compositionally biased stretch (low complexity) spans 98-110 (TGTTTATTTRTTT). The span at 111–125 (NFRSESKASSSTENI) shows a compositional bias: polar residues. Low complexity predominate over residues 257–270 (QQKESQQMQLWQQQ). Positions 416-486 (ELENMSKLVN…DLFHEHLAFG (71 aa)) constitute a PAS domain.

Belongs to the ERT1/acuK family.

The protein localises to the nucleus. Functionally, transcription factor which regulates nonfermentable carbon utilization. This Zygosaccharomyces rouxii (strain ATCC 2623 / CBS 732 / NBRC 1130 / NCYC 568 / NRRL Y-229) protein is Glucose starvation modulator protein 1 (GSM1).